The sequence spans 440 residues: Xaa-Pro dipeptidase (440 aa).

Aspartate 241, aspartate 252, histidine 333, glutamate 378, and glutamate 417 together coordinate Mn(2+).

It belongs to the peptidase M24B family. Bacterial-type prolidase subfamily. Requires Mn(2+) as cofactor.

It catalyses the reaction Xaa-L-Pro dipeptide + H2O = an L-alpha-amino acid + L-proline. In terms of biological role, splits dipeptides with a prolyl residue in the C-terminal position. This chain is Xaa-Pro dipeptidase, found in Glaesserella parasuis serovar 5 (strain SH0165) (Haemophilus parasuis).